Reading from the N-terminus, the 304-residue chain is Acetyl-coenzyme A carboxylase carboxyl transferase subunit beta (304 aa).

In terms of domain architecture, CoA carboxyltransferase N-terminal spans 25 to 294 (LWIKCPETGE…EAARRESGSQ (270 aa)).

This sequence belongs to the AccD/PCCB family. Acetyl-CoA carboxylase is a heterohexamer composed of biotin carboxyl carrier protein (AccB), biotin carboxylase (AccC) and two subunits each of ACCase subunit alpha (AccA) and ACCase subunit beta (AccD).

It is found in the cytoplasm. It catalyses the reaction N(6)-carboxybiotinyl-L-lysyl-[protein] + acetyl-CoA = N(6)-biotinyl-L-lysyl-[protein] + malonyl-CoA. Its pathway is lipid metabolism; malonyl-CoA biosynthesis; malonyl-CoA from acetyl-CoA: step 1/1. Component of the acetyl coenzyme A carboxylase (ACC) complex. Biotin carboxylase (BC) catalyzes the carboxylation of biotin on its carrier protein (BCCP) and then the CO(2) group is transferred by the transcarboxylase to acetyl-CoA to form malonyl-CoA. This chain is Acetyl-coenzyme A carboxylase carboxyl transferase subunit beta, found in Sinorhizobium fredii (strain NBRC 101917 / NGR234).